A 147-amino-acid chain; its full sequence is uncharacterized protein (147 aa).

It belongs to the MG185/MG260 family.

This is an uncharacterized protein from Mycoplasma pneumoniae (strain ATCC 29342 / M129 / Subtype 1) (Mycoplasmoides pneumoniae).